A 205-amino-acid polypeptide reads, in one-letter code: MSLIPEIDAFLGCPTPDAWIEAALADQETLLIDHKNCEFKAASTALSLIAKYNTHLDLINMMSRLAREELVHHEQVLRLMKRRGVPLRPVSAGRYASGLRRLVRAHEPVKLVDTLVVGAFIEARSCERFAALVPHLDEELGRFYHGLLKSEARHYQGYLKLAHNYGDEADIARCVELVRAAEMELIQSPDQELRFHSGIPQALAA.

Positions 38, 69, 72, 122, 151, and 154 each coordinate Fe cation.

The protein belongs to the MiaE family. In terms of assembly, homodimer. Requires Fe cation as cofactor.

It carries out the reaction 2-methylsulfanyl-N(6)-dimethylallyladenosine(37) in tRNA + AH2 + O2 = N(6)-[(2E)-4-hydroxy-3-methylbut-2-en-1-yl]-2-(methylsulfanyl)adenosine(37) in tRNA + A + H2O. It participates in tRNA modification; 2-methylthio-N-6-(cis-hydroxy)isopentenyl adenosine-tRNA biosynthesis. Its function is as follows. Involved in specific tRNA modification. Catalyzes the oxygen-dependent hydroxylation of 2-methylthio-N-6-isopentenyl adenosine (ms2i6A) to produce 2-methylthio-N-6-(cis-hydroxy)isopentenyl adenosine (ms2io6A) at position 37 in tRNAs. In Pseudomonas putida (strain ATCC 47054 / DSM 6125 / CFBP 8728 / NCIMB 11950 / KT2440), this protein is tRNA 2-(methylsulfanyl)-N(6)-isopentenyladenosine(37) hydroxylase.